The primary structure comprises 330 residues: Type II methyltransferase M.HaeIII (330 aa).

The 327-residue stretch at 1–327 (MNLISLFSGA…KTIKSALEIC (327 aa)) folds into the SAM-dependent MTase C5-type domain. ATP is bound by residues Glu29 and 50–51 (DI). Cys71 is an active-site residue. Asn260 contributes to the ATP binding site.

The protein belongs to the class I-like SAM-binding methyltransferase superfamily. C5-methyltransferase family. In terms of assembly, monomer.

It catalyses the reaction a 2'-deoxycytidine in DNA + S-adenosyl-L-methionine = a 5-methyl-2'-deoxycytidine in DNA + S-adenosyl-L-homocysteine + H(+). A methylase, recognizes the double-stranded sequence 5'-GGCC-3', methylates C-3 on both strands, and protects the DNA from cleavage by the HaeIII endonuclease. This is Type II methyltransferase M.HaeIII (haeIIIM) from Haemophilus aegyptius.